The primary structure comprises 264 residues: Thymidylate synthase (264 aa).

R21 is a binding site for dUMP. (6R)-5,10-methylene-5,6,7,8-tetrahydrofolate is bound at residue H51. Residue 126 to 127 (RR) coordinates dUMP. C146 functions as the Nucleophile in the catalytic mechanism. DUMP is bound by residues 166 to 169 (RSAD), N177, and 207 to 209 (HIY). D169 serves as a coordination point for (6R)-5,10-methylene-5,6,7,8-tetrahydrofolate. A263 contributes to the (6R)-5,10-methylene-5,6,7,8-tetrahydrofolate binding site.

This sequence belongs to the thymidylate synthase family. Bacterial-type ThyA subfamily. As to quaternary structure, homodimer.

The protein resides in the cytoplasm. The catalysed reaction is dUMP + (6R)-5,10-methylene-5,6,7,8-tetrahydrofolate = 7,8-dihydrofolate + dTMP. The protein operates within pyrimidine metabolism; dTTP biosynthesis. Functionally, catalyzes the reductive methylation of 2'-deoxyuridine-5'-monophosphate (dUMP) to 2'-deoxythymidine-5'-monophosphate (dTMP) while utilizing 5,10-methylenetetrahydrofolate (mTHF) as the methyl donor and reductant in the reaction, yielding dihydrofolate (DHF) as a by-product. This enzymatic reaction provides an intracellular de novo source of dTMP, an essential precursor for DNA biosynthesis. The polypeptide is Thymidylate synthase (Cupriavidus metallidurans (strain ATCC 43123 / DSM 2839 / NBRC 102507 / CH34) (Ralstonia metallidurans)).